Consider the following 455-residue polypeptide: Dihydrolipoyllysine-residue succinyltransferase component of 2-oxoglutarate dehydrogenase complex, mitochondrial (455 aa).

The transit peptide at Met-1–Lys-68 directs the protein to the mitochondrion. A Lipoyl-binding domain is found at Val-71–Arg-145. Phosphoserine is present on Ser-82. Lys-111 is modified (N6-lipoyllysine). Lys-155 carries the post-translational modification N6-acetyllysine. Low complexity predominate over residues Lys-155 to Ala-173. The segment at Lys-155–Gly-220 is disordered. Residues Val-174–Ser-193 are compositionally biased toward pro residues. 5 positions are modified to N6-acetyllysine: Lys-269, Lys-274, Lys-275, Lys-279, and Lys-309. Residues His-426 and Asp-430 contribute to the active site.

The protein belongs to the 2-oxoacid dehydrogenase family. As to quaternary structure, the 2-oxoglutarate dehydrogenase complex is composed of OGDH (2-oxoglutarate dehydrogenase; E1), DLST (dihydrolipoamide succinyltransferase; E2), DLD (dihydrolipoamide dehydrogenase; E3) and the assembly factor KGD4. It contains multiple copies of the three enzymatic components (E1, E2 and E3). In the nucleus, the 2-oxoglutarate dehydrogenase complex associates with KAT2A. Interacts with ABHD11; this interaction maintains the functional lipoylation of the 2-oxoglutarate dehydrogenase complex. Requires (R)-lipoate as cofactor.

The protein resides in the mitochondrion matrix. It is found in the nucleus. The enzyme catalyses N(6)-[(R)-dihydrolipoyl]-L-lysyl-[protein] + succinyl-CoA = N(6)-[(R)-S(8)-succinyldihydrolipoyl]-L-lysyl-[protein] + CoA. It functions in the pathway amino-acid degradation; L-lysine degradation via saccharopine pathway; glutaryl-CoA from L-lysine: step 6/6. It participates in carbohydrate metabolism; tricarboxylic acid cycle. Its function is as follows. Dihydrolipoamide succinyltransferase (E2) component of the 2-oxoglutarate dehydrogenase complex. The 2-oxoglutarate dehydrogenase complex catalyzes the overall conversion of 2-oxoglutarate to succinyl-CoA and CO(2). The 2-oxoglutarate dehydrogenase complex is mainly active in the mitochondrion. A fraction of the 2-oxoglutarate dehydrogenase complex also localizes in the nucleus and is required for lysine succinylation of histones: associates with KAT2A on chromatin and provides succinyl-CoA to histone succinyltransferase KAT2A. This Bos taurus (Bovine) protein is Dihydrolipoyllysine-residue succinyltransferase component of 2-oxoglutarate dehydrogenase complex, mitochondrial.